Here is a 354-residue protein sequence, read N- to C-terminus: Protein RecA (354 aa).

78-85 lines the ATP pocket; sequence GPESSGKT.

This sequence belongs to the RecA family.

It localises to the cytoplasm. Can catalyze the hydrolysis of ATP in the presence of single-stranded DNA, the ATP-dependent uptake of single-stranded DNA by duplex DNA, and the ATP-dependent hybridization of homologous single-stranded DNAs. It interacts with LexA causing its activation and leading to its autocatalytic cleavage. The sequence is that of Protein RecA from Zymomonas mobilis subsp. mobilis (strain ATCC 31821 / ZM4 / CP4).